A 354-amino-acid polypeptide reads, in one-letter code: UDP-N-acetylglucosamine--N-acetylmuramyl-(pentapeptide) pyrophosphoryl-undecaprenol N-acetylglucosamine transferase (354 aa).

Residues 14-16, N126, R162, S190, I243, 262-267, and Q287 contribute to the UDP-N-acetyl-alpha-D-glucosamine site; these read TGG and ALTVSE.

The protein belongs to the glycosyltransferase 28 family. MurG subfamily.

It localises to the cell inner membrane. The enzyme catalyses di-trans,octa-cis-undecaprenyl diphospho-N-acetyl-alpha-D-muramoyl-L-alanyl-D-glutamyl-meso-2,6-diaminopimeloyl-D-alanyl-D-alanine + UDP-N-acetyl-alpha-D-glucosamine = di-trans,octa-cis-undecaprenyl diphospho-[N-acetyl-alpha-D-glucosaminyl-(1-&gt;4)]-N-acetyl-alpha-D-muramoyl-L-alanyl-D-glutamyl-meso-2,6-diaminopimeloyl-D-alanyl-D-alanine + UDP + H(+). It functions in the pathway cell wall biogenesis; peptidoglycan biosynthesis. Functionally, cell wall formation. Catalyzes the transfer of a GlcNAc subunit on undecaprenyl-pyrophosphoryl-MurNAc-pentapeptide (lipid intermediate I) to form undecaprenyl-pyrophosphoryl-MurNAc-(pentapeptide)GlcNAc (lipid intermediate II). This Photobacterium profundum (strain SS9) protein is UDP-N-acetylglucosamine--N-acetylmuramyl-(pentapeptide) pyrophosphoryl-undecaprenol N-acetylglucosamine transferase.